The chain runs to 331 residues: Cytosolic 5'-nucleotidase 3A (331 aa).

The active-site Nucleophile is Asp-83. Residues Asp-83 and Asp-85 each contribute to the Mg(2+) site. Residue Asp-85 is the Proton donor of the active site. Glu-130 contributes to the CMP binding site. Residues Glu-130 and Ser-151 each coordinate N(7)-methyl-GMP. Substrate-binding positions include 198-200 (SAG) and Lys-247. Asp-272 contributes to the Mg(2+) binding site. Phosphoserine is present on Ser-273.

The protein belongs to the pyrimidine 5'-nucleotidase family. As to quaternary structure, monomer. Isoform 2 is highly expressed in the brain, heart, spleen, kidney and blood. Isoform 2 is expressed (at protein level) in the spleen, skeletal muscle and gastrointestinal epithelia.

The protein localises to the cytoplasm. The enzyme catalyses N(7)-methyl-GMP + H2O = N(7)-methylguanosine + phosphate. The catalysed reaction is a ribonucleoside 5'-phosphate + H2O = a ribonucleoside + phosphate. Nucleotidase which shows specific activity towards cytidine monophosphate (CMP) and 7-methylguanosine monophosphate (m(7)GMP). CMP seems to be the preferred substrate. The sequence is that of Cytosolic 5'-nucleotidase 3A (Nt5c3a) from Mus musculus (Mouse).